An 867-amino-acid chain; its full sequence is Rifampicin phosphotransferase (867 aa).

Residues 1–314 (MKPYVLKFQE…FYIVQSRPIT (314 aa)) form an ATP-binding region. ATP-binding residues include Lys-22, Arg-117, Gly-132, Thr-136, Gln-183, Glu-297, Gln-309, and Arg-311. The rifampicin-binding stretch occupies residues 327-754 (NRVYISVAHQ…TSDGEMINGE (428 aa)). Rifampicin is bound by residues Gln-336 and Tyr-351. Positions 767–865 (GLPVSSGTVE…INGTEGYIEI (99 aa)) are swivel phosphohistidine. His-825 acts as the Tele-phosphohistidine intermediate in catalysis.

The protein belongs to the rifampicin phosphotransferase family.

It catalyses the reaction rifampicin + ATP + H2O = 21-phosphorifampicin + AMP + phosphate + 2 H(+). Functionally, catalyzes the phosphorylation of rifampicin, also known as rifampin (RIF), leading to its inactivation. Confers high level resistance to a variety of clinically used rifamycin antibiotics. Does not show phosphoenolpyruvate (PEP) synthase activity. The protein is Rifampicin phosphotransferase of Listeria monocytogenes serotype 4b (strain F2365).